The primary structure comprises 457 residues: uncharacterized protein (457 aa).

Lysine 75 carries the N6-(pyridoxal phosphate)lysine modification.

The cofactor is pyridoxal 5'-phosphate.

This is an uncharacterized protein from Sinorhizobium fredii (strain NBRC 101917 / NGR234).